The sequence spans 274 residues: 2,3,4,5-tetrahydropyridine-2,6-dicarboxylate N-succinyltransferase (274 aa).

Substrate is bound by residues arginine 107 and aspartate 144.

The protein belongs to the transferase hexapeptide repeat family. As to quaternary structure, homotrimer.

The protein localises to the cytoplasm. It carries out the reaction (S)-2,3,4,5-tetrahydrodipicolinate + succinyl-CoA + H2O = (S)-2-succinylamino-6-oxoheptanedioate + CoA. The protein operates within amino-acid biosynthesis; L-lysine biosynthesis via DAP pathway; LL-2,6-diaminopimelate from (S)-tetrahydrodipicolinate (succinylase route): step 1/3. This chain is 2,3,4,5-tetrahydropyridine-2,6-dicarboxylate N-succinyltransferase, found in Cereibacter sphaeroides (strain ATCC 17023 / DSM 158 / JCM 6121 / CCUG 31486 / LMG 2827 / NBRC 12203 / NCIMB 8253 / ATH 2.4.1.) (Rhodobacter sphaeroides).